We begin with the raw amino-acid sequence, 345 residues long: Uroporphyrinogen decarboxylase (345 aa).

Residues 26–30 (RQAGR), Phe45, Asp75, Tyr151, Ser206, and His320 each bind substrate.

This sequence belongs to the uroporphyrinogen decarboxylase family. Homodimer.

It is found in the cytoplasm. It catalyses the reaction uroporphyrinogen III + 4 H(+) = coproporphyrinogen III + 4 CO2. It participates in porphyrin-containing compound metabolism; protoporphyrin-IX biosynthesis; coproporphyrinogen-III from 5-aminolevulinate: step 4/4. Functionally, catalyzes the decarboxylation of four acetate groups of uroporphyrinogen-III to yield coproporphyrinogen-III. The polypeptide is Uroporphyrinogen decarboxylase (Staphylococcus carnosus (strain TM300)).